Reading from the N-terminus, the 152-residue chain is Protein-export protein SecB (152 aa).

Belongs to the SecB family. As to quaternary structure, homotetramer, a dimer of dimers. One homotetramer interacts with 1 SecA dimer.

The protein localises to the cytoplasm. In terms of biological role, one of the proteins required for the normal export of preproteins out of the cell cytoplasm. It is a molecular chaperone that binds to a subset of precursor proteins, maintaining them in a translocation-competent state. It also specifically binds to its receptor SecA. The sequence is that of Protein-export protein SecB from Rickettsia massiliae (strain Mtu5).